Here is a 965-residue protein sequence, read N- to C-terminus: Collagenase ColQ1 (965 aa).

The signal sequence occupies residues 1–30 (MNKKSKINKVMLSISTMALSLGALQAPASA). Residues 31 to 93 (EEKVPYNVLK…KAAVKQVKES (63 aa)) constitute a propeptide that is removed on maturation. Positions 94–366 (YSMADLNKMN…AVEQITTNYN (273 aa)) are activator domain. The S1 metalloprotease domain stretch occupies residues 94 to 765 (YSMADLNKMN…VFHGIAKDDG (672 aa)). Residues 376–645 (DLEKIRKEGK…MQQLIDNQDK (270 aa)) are catalytic subdomain. His-501 contributes to the Zn(2+) binding site. The active site involves Glu-502. 2 residues coordinate Zn(2+): His-505 and Glu-533. Residues 653–765 (DDYLAEHAPK…VFHGIAKDDG (113 aa)) form a helper subdomain region. The PKD domain maps to 769–850 (APTVNINGPY…ESKSETTVTV (82 aa)). Residues 842 to 867 (SKSETTVTVKDGSLTESEPNNRPEEA) are disordered. The span at 845–859 (ETTVTVKDGSLTESE) shows a compositional bias: polar residues. The interval 853–965 (GSLTESEPNN…GDGTYKLSVK (113 aa)) is collagen-binding domain.

Belongs to the peptidase M9B family. Collagenase subfamily. The cofactor is Ca(2+). Requires Zn(2+) as cofactor.

It is found in the secreted. It carries out the reaction Digestion of native collagen in the triple helical region at Xaa-|-Gly bonds. With synthetic peptides, a preference is shown for Gly at P3 and P1', Pro and Ala at P2 and P2', and hydroxyproline, Ala or Arg at P3'.. Its activity is regulated as follows. Strongly inhibited by EDTA. Not inhibited by E-64 and PMSF, broad-spectrum cysteine and serine protease inhibitors. Its function is as follows. Acts as a true collagenase, which is highly active and cleaves natively folded collagen. In vitro, can also cleave gelatin and the synthetic peptide FALGPA (furylacryloyl-Leu-Gly-Pro-Ala). Causes damage on dermal collagen (COL), resulting in gaps in the tissue, which might lead to an accelerated bacterial infiltration and penetration into deeper sites of the host. In Bacillus cereus (strain Q1), this protein is Collagenase ColQ1.